The following is a 225-amino-acid chain: CRISPR pre-crRNA endoribonuclease Cas5d (225 aa).

Belongs to the CRISPR-associated protein Cas5 family. Subtype I-C/Dvulg subfamily. It depends on Does not require a metal cofactor. as a cofactor.

CRISPR (clustered regularly interspaced short palindromic repeat) is an adaptive immune system that provides protection against mobile genetic elements (viruses, transposable elements and conjugative plasmids). CRISPR clusters contain spacers, sequences complementary to antecedent mobile elements, and target invading nucleic acids. CRISPR clusters are transcribed and processed into CRISPR RNA (crRNA). This protein is a sequence-specific endonuclease that cleaves pre-crRNA at G21 into mature crRNA. Does not cleave pre-crRNA associated with the T.thermophilus strain HB27 Cas5 protein (AC Q746C2) CRISPR locus. The reaction mechanism may proceed by an intramolecular attack of the 2'-hydroxyl group of G21 on the scissile phosphodiester, cutting the precursor 3' to G21 residue yielding 5'-hydroxyl and 2' and/or 3' ends lacking a hydroxyl group (perhaps a 2'/3' cyclic phosphodiester). This chain is CRISPR pre-crRNA endoribonuclease Cas5d, found in Mannheimia succiniciproducens (strain KCTC 0769BP / MBEL55E).